The sequence spans 349 residues: Anthranilate phosphoribosyltransferase (349 aa).

Residues Gly82, 85–86 (GD), 92–95 (NVSS), 110–118 (KHGNRAVSG), and Ser122 contribute to the 5-phospho-alpha-D-ribose 1-diphosphate site. Gly82 serves as a coordination point for anthranilate. Residue Ser94 coordinates Mg(2+). Asn113 provides a ligand contact to anthranilate. Residue Arg168 coordinates anthranilate. Mg(2+) is bound by residues Asp227 and Glu228.

This sequence belongs to the anthranilate phosphoribosyltransferase family. As to quaternary structure, homodimer. Requires Mg(2+) as cofactor.

It carries out the reaction N-(5-phospho-beta-D-ribosyl)anthranilate + diphosphate = 5-phospho-alpha-D-ribose 1-diphosphate + anthranilate. It functions in the pathway amino-acid biosynthesis; L-tryptophan biosynthesis; L-tryptophan from chorismate: step 2/5. Its function is as follows. Catalyzes the transfer of the phosphoribosyl group of 5-phosphorylribose-1-pyrophosphate (PRPP) to anthranilate to yield N-(5'-phosphoribosyl)-anthranilate (PRA). The protein is Anthranilate phosphoribosyltransferase of Pseudomonas aeruginosa (strain LESB58).